The following is a 557-amino-acid chain: Potassium-transporting ATPase potassium-binding subunit (557 aa).

12 helical membrane-spanning segments follow: residues 5–25 (GFLLIATFLLVLMVLARPLGS), 63–83 (LSAILGLNILGLAVLFFMLLG), 132–152 (GLTVQNFLSAASGIAVIFALI), 170–190 (LLRITLWVLAPVALLIALFFI), 253–273 (FVQMLAIFLIPTALCFAFGEV), 283–303 (LLWAMSVIFVICTGVVMWAEV), 329–349 (VLVSSLFAVVTTAASCGAVIA), 356–376 (ALGGMVPMWLMQIGEVVFGGV), 379–399 (GLYGMMLFVLLAVFIAGLMIG), 416–436 (LTALAILVTPTLVLMGAALAM), 484–504 (LLALCMFVGRFGVIIPVMAIA), and 526–546 (LFVGLLIGTVLLVGALTFIPA).

The protein belongs to the KdpA family. The system is composed of three essential subunits: KdpA, KdpB and KdpC.

Its subcellular location is the cell inner membrane. In terms of biological role, part of the high-affinity ATP-driven potassium transport (or Kdp) system, which catalyzes the hydrolysis of ATP coupled with the electrogenic transport of potassium into the cytoplasm. This subunit binds the periplasmic potassium ions and delivers the ions to the membrane domain of KdpB through an intramembrane tunnel. The protein is Potassium-transporting ATPase potassium-binding subunit of Escherichia coli O6:H1 (strain CFT073 / ATCC 700928 / UPEC).